The chain runs to 128 residues: MASLDIHLYVKKDLTYGECVRVAKEKYKIIHRLLYISIIFLFLNYVVDIVCYVKNYNGFSFFCWVFLNLGVIGIIITVIIYYISIPKPDAESEFLNKPDSLNQNVGESQSNEPPKYTSTFMDELDKQD.

Helical transmembrane passes span 33–53 (LLYI…VCYV) and 61–81 (FFCW…VIIY). The span at 99 to 120 (DSLNQNVGESQSNEPPKYTSTF) shows a compositional bias: polar residues. The interval 99–128 (DSLNQNVGESQSNEPPKYTSTFMDELDKQD) is disordered.

Its subcellular location is the membrane. This is an uncharacterized protein from Schizosaccharomyces pombe (strain 972 / ATCC 24843) (Fission yeast).